Here is a 339-residue protein sequence, read N- to C-terminus: UDP-3-O-acylglucosamine N-acyltransferase (339 aa).

The active-site Proton acceptor is the His-238.

This sequence belongs to the transferase hexapeptide repeat family. LpxD subfamily. Homotrimer.

The catalysed reaction is a UDP-3-O-[(3R)-3-hydroxyacyl]-alpha-D-glucosamine + a (3R)-hydroxyacyl-[ACP] = a UDP-2-N,3-O-bis[(3R)-3-hydroxyacyl]-alpha-D-glucosamine + holo-[ACP] + H(+). The protein operates within bacterial outer membrane biogenesis; LPS lipid A biosynthesis. Functionally, catalyzes the N-acylation of UDP-3-O-acylglucosamine using 3-hydroxyacyl-ACP as the acyl donor. Is involved in the biosynthesis of lipid A, a phosphorylated glycolipid that anchors the lipopolysaccharide to the outer membrane of the cell. This chain is UDP-3-O-acylglucosamine N-acyltransferase, found in Aeromonas hydrophila subsp. hydrophila (strain ATCC 7966 / DSM 30187 / BCRC 13018 / CCUG 14551 / JCM 1027 / KCTC 2358 / NCIMB 9240 / NCTC 8049).